Reading from the N-terminus, the 156-residue chain is MSRRKNIKKRPIPPDPVYNSYLINMTIRRVMRSGKKSLASNIIYDALKTVGERTGRDPLEVFEQAVKNATPLVEVKARRVGGATYQVPMEVRPGRGTTLALRWLIQFSRSRSGRTMAGKLANEIMDAANETGGAIKKREETHRMAEANKAFAHYRY.

It belongs to the universal ribosomal protein uS7 family. As to quaternary structure, part of the 30S ribosomal subunit. Contacts proteins S9 and S11.

In terms of biological role, one of the primary rRNA binding proteins, it binds directly to 16S rRNA where it nucleates assembly of the head domain of the 30S subunit. Is located at the subunit interface close to the decoding center, probably blocks exit of the E-site tRNA. The protein is Small ribosomal subunit protein uS7 of Gloeothece citriformis (strain PCC 7424) (Cyanothece sp. (strain PCC 7424)).